The following is a 445-amino-acid chain: Exodeoxyribonuclease 7 large subunit (445 aa).

Belongs to the XseA family. In terms of assembly, heterooligomer composed of large and small subunits.

The protein localises to the cytoplasm. It carries out the reaction Exonucleolytic cleavage in either 5'- to 3'- or 3'- to 5'-direction to yield nucleoside 5'-phosphates.. Its function is as follows. Bidirectionally degrades single-stranded DNA into large acid-insoluble oligonucleotides, which are then degraded further into small acid-soluble oligonucleotides. This is Exodeoxyribonuclease 7 large subunit from Xanthomonas euvesicatoria pv. vesicatoria (strain 85-10) (Xanthomonas campestris pv. vesicatoria).